The sequence spans 718 residues: Protein Hook homolog 1 (718 aa).

The Calponin-homology (CH) domain maps to 8-124; that stretch reads PLLCDSLILW…RLMQLILGCA (117 aa). Coiled coils occupy residues 164–428 and 473–652; these read SASD…ELRY and LLLQ…AKLR.

The protein belongs to the hook family. Interacts with microtubules.

It localises to the cytoplasm. Its subcellular location is the cytoskeleton. In terms of biological role, may function to promote vesicle trafficking and/or fusion. In Gallus gallus (Chicken), this protein is Protein Hook homolog 1 (HOOK1).